We begin with the raw amino-acid sequence, 515 residues long: Leucine-rich repeat transmembrane neuronal protein 2 (515 aa).

Residues 1-33 (MGLHFKWPLGAPMLAAIYAMSVVLKMLPALGMA) form the signal peptide. Positions 34–61 (CPPKCRCEKLLFYCDSQGFHSVPNATDK) constitute an LRRNT domain. The Extracellular portion of the chain corresponds to 34-421 (CPPKCRCEKL…EPDNAIFTQR (388 aa)). Asn-57 carries an N-linked (GlcNAc...) asparagine glycan. LRR repeat units lie at residues 63–83 (SLGL…QFAS), 86–107 (QLTW…AFQG), 110–131 (KLKE…TFTQ), 134–155 (NLQN…LFYG), 158–179 (KLQT…LFWD), 182–203 (SLEF…GFAG), 206–227 (KLRE…HFLR), 230–251 (SLHT…MDWT), 254–275 (TLEK…VFET), and 278–299 (NLKI…ILNS). N-linked (GlcNAc...) asparagine glycosylation is present at Asn-126. N-linked (GlcNAc...) asparagine glycosylation is present at Asn-243. Residues 311 to 362 (NLWECSPRVCALASWLGSFQGRWEHSILCHSPDHTQGEDILDAVHGFQLCWN) enclose the LRRCT domain. Asn-362 carries N-linked (GlcNAc...) asparagine glycosylation. A helical transmembrane segment spans residues 422-442 (VITGTMALLFSFFFIIFIVFI). The Cytoplasmic segment spans residues 443–515 (SRKCCPPTLR…QQLPYKECEV (73 aa)). An Involved in DLG4-binding motif is present at residues 512-515 (ECEV).

The protein belongs to the LRRTM family. Interacts with DLG4. Interacts with neurexin NRXN1; interaction is mediated by heparan sulfate glycan modification on neurexin. In terms of tissue distribution, expressed in neuronal tissues.

Its subcellular location is the cell membrane. The protein localises to the postsynaptic cell membrane. Involved in the development and maintenance of excitatory synapses in the vertebrate nervous system. Regulates surface expression of AMPA receptors and instructs the development of functional glutamate release sites. Acts as a ligand for the presynaptic receptors NRXN1-A and NRXN1-B. The protein is Leucine-rich repeat transmembrane neuronal protein 2 (Lrrtm2) of Mus musculus (Mouse).